Consider the following 333-residue polypeptide: MSRSFMIILTIMLIALSLGEVLAAENGYDLIIVRNDDLIDYLIALPYSHLLDIPILPVNPKELDDVTKAQLYSYIQLGRDKILIIGNNNAVSLNVEKELEDMGFKVTRIGGADRTETAEKLALHFYPNGSKLVILASAWDYGSTLAASEFAMEYKCPILLTWENQLSPSALEGIKKLNPKIVILVGFGINETVEKTIEDMGYETYWIGRDIEPPPIETTTTTTPNQTSSSKSFFLGVLVTLMILSPVIVYLWKKREERRSQFLEQFSEKEIEVLRAIIENGGEIKQEELPKIVGYSRPTISRIIQDLEKKGIVEREKSGKTFIVRVIKKIKLD.

An N-terminal signal peptide occupies residues 1-23 (MSRSFMIILTIMLIALSLGEVLA). The helical transmembrane segment at 232 to 252 (SFFLGVLVTLMILSPVIVYLW) threads the bilayer.

The protein resides in the membrane. This is an uncharacterized protein from Pyrococcus abyssi (strain GE5 / Orsay).